The primary structure comprises 225 residues: PKHD-type hydroxylase YbiX (225 aa).

Residues 78–177 (TLSTPLFNRY…RVASFMWIQS (100 aa)) enclose the Fe2OG dioxygenase domain. Positions 96, 98, and 158 each coordinate Fe cation. Position 168 (arginine 168) interacts with 2-oxoglutarate.

It depends on Fe(2+) as a cofactor. L-ascorbate serves as cofactor.

The sequence is that of PKHD-type hydroxylase YbiX from Escherichia coli (strain K12 / DH10B).